Here is a 367-residue protein sequence, read N- to C-terminus: DNA replication and repair protein RecF (367 aa).

30-37 (GANGSGKT) serves as a coordination point for ATP.

Belongs to the RecF family.

Its subcellular location is the cytoplasm. In terms of biological role, the RecF protein is involved in DNA metabolism; it is required for DNA replication and normal SOS inducibility. RecF binds preferentially to single-stranded, linear DNA. It also seems to bind ATP. This Pseudomonas putida (strain GB-1) protein is DNA replication and repair protein RecF.